A 424-amino-acid chain; its full sequence is Glutamyl-tRNA reductase (424 aa).

Residues 49–52 (TCNR), Ser-107, 112–114 (EPQ), and Gln-118 each bind substrate. The active-site Nucleophile is the Cys-50. 187-192 (GAGETI) lines the NADP(+) pocket.

The protein belongs to the glutamyl-tRNA reductase family. Homodimer.

The enzyme catalyses (S)-4-amino-5-oxopentanoate + tRNA(Glu) + NADP(+) = L-glutamyl-tRNA(Glu) + NADPH + H(+). It functions in the pathway porphyrin-containing compound metabolism; protoporphyrin-IX biosynthesis; 5-aminolevulinate from L-glutamyl-tRNA(Glu): step 1/2. Its function is as follows. Catalyzes the NADPH-dependent reduction of glutamyl-tRNA(Glu) to glutamate 1-semialdehyde (GSA). In Pseudomonas fluorescens (strain ATCC BAA-477 / NRRL B-23932 / Pf-5), this protein is Glutamyl-tRNA reductase.